A 137-amino-acid polypeptide reads, in one-letter code: UPF0275 protein PM0489 (137 aa).

It belongs to the UPF0275 family.

The chain is UPF0275 protein PM0489 from Pasteurella multocida (strain Pm70).